A 612-amino-acid polypeptide reads, in one-letter code: Putative pentatricopeptide repeat-containing protein At5g40405 (612 aa).

10 PPR repeats span residues 70–104 (TLFA…GNDL), 107–141 (DNYT…GFDN), 142–172 (DPHV…IPCP), 173–203 (DFVC…MPER), 204–238 (DPIA…GVKV), 239–273 (NGVA…KIKI), 274–304 (TVRL…MEEK), 305–339 (NVYT…GVTP), 340–375 (NAVT…GIEP), and 376–410 (QLEH…PHAA). The type E motif stretch occupies residues 411-486 (VWSSLLHASR…QPGCSVMEVN (76 aa)). The tract at residues 487–517 (GEVHEFFVGDKSHPKYTQIDAVWKDISRRLR) is type E(+) motif. The tract at residues 518-612 (LAGYKADTTP…DGHCSCNGFW (95 aa)) is type DYW motif.

The protein belongs to the PPR family. PCMP-H subfamily.

This Arabidopsis thaliana (Mouse-ear cress) protein is Putative pentatricopeptide repeat-containing protein At5g40405 (PCMP-H14).